The sequence spans 170 residues: Orotate phosphoribosyltransferase (170 aa).

5-phospho-alpha-D-ribose 1-diphosphate-binding positions include R86, K87, K90, H92, and 111 to 119; that span reads EDVTTSGGS. Orotate contacts are provided by T115 and R143.

It belongs to the purine/pyrimidine phosphoribosyltransferase family. PyrE subfamily. Homodimer. It depends on Mg(2+) as a cofactor.

The catalysed reaction is orotidine 5'-phosphate + diphosphate = orotate + 5-phospho-alpha-D-ribose 1-diphosphate. It participates in pyrimidine metabolism; UMP biosynthesis via de novo pathway; UMP from orotate: step 1/2. In terms of biological role, catalyzes the transfer of a ribosyl phosphate group from 5-phosphoribose 1-diphosphate to orotate, leading to the formation of orotidine monophosphate (OMP). This is Orotate phosphoribosyltransferase from Methanoculleus marisnigri (strain ATCC 35101 / DSM 1498 / JR1).